A 301-amino-acid polypeptide reads, in one-letter code: UDP-N-acetylenolpyruvoylglucosamine reductase (301 aa).

An FAD-binding PCMH-type domain is found at 30–194; sequence VGGEADYLVF…LSVKFALAPG (165 aa). The active site involves R173. Catalysis depends on S223, which acts as the Proton donor. E293 is a catalytic residue.

This sequence belongs to the MurB family. FAD is required as a cofactor.

The protein resides in the cytoplasm. It catalyses the reaction UDP-N-acetyl-alpha-D-muramate + NADP(+) = UDP-N-acetyl-3-O-(1-carboxyvinyl)-alpha-D-glucosamine + NADPH + H(+). It functions in the pathway cell wall biogenesis; peptidoglycan biosynthesis. Its function is as follows. Cell wall formation. This is UDP-N-acetylenolpyruvoylglucosamine reductase from Streptococcus pneumoniae (strain 70585).